The following is an 891-amino-acid chain: Dynein axonemal intermediate chain 3 (891 aa).

A compositionally biased stretch (basic residues) spans 1–16; sequence MAPKQKKKSSRRKKSP. The interval 1–27 is disordered; that stretch reads MAPKQKKKSSRRKKSPKPILAASEDME. WD repeat units follow at residues 395 to 435, 477 to 533, 670 to 709, and 713 to 753; these read ESPD…DRIE, GHKR…PLTP, IHDG…GPLL, and CAPK…HEPA. A coiled-coil region spans residues 817-861; sequence HLEYVEQRKKIREQEKKEMEQEMAKKKVKIYQKSKEQMEAELKMD.

As to quaternary structure, interacts with ACTR2; this interaction reduces binding of the Arp2/3 complex to the VCA domain of nucleation promoting factors. Part of the multisubunit axonemal dynein complex formed at least of two heavy chains and a number of intermediate and light chains. Found in a associated with the catalytic heavy chain DNAH2, the intermediate chain DNAI4, and the light chain DYNLT1.

It is found in the cytoplasm. In terms of biological role, acts as a negative regulator of cell migration, invasion, and metastasis downstream of p53/TP53, through inhibition of Arp2/3 complex-mediated actin polymerization. Via its association with the multisubunit axonemal dynein complex, is potentially involved in the regulation of cilia function. May play a role in osteogenesis of dental tissue-derived mesenchymal stem cells. The polypeptide is Dynein axonemal intermediate chain 3 (DNAI3) (Macaca fascicularis (Crab-eating macaque)).